The chain runs to 481 residues: Phosphoenolpyruvate phosphatase (481 aa).

The N-terminal stretch at 1-36 is a signal peptide; the sequence is MPIYTSRSCFYLLLFHIILLCSVDKTLCRQTSSFVR. N-linked (GlcNAc...) asparagine glycosylation is present at N109. The Fe cation site is built by D168, D195, and Y198. D195 serves as a coordination point for Zn(2+). Residue N206 is glycosylated (N-linked (GlcNAc...) asparagine). Residues N232 and H317 each coordinate Zn(2+). N232 is a binding site for substrate. H327 functions as the Proton donor in the catalytic mechanism. H354 is a binding site for Zn(2+). Substrate is bound at residue 354 to 356; sequence HVH. Position 356 (H356) interacts with Fe cation. 2 N-linked (GlcNAc...) asparagine glycosylation sites follow: N370 and N427.

The protein belongs to the metallophosphoesterase superfamily. Purple acid phosphatase family.

The protein localises to the vacuole lumen. It catalyses the reaction phosphoenolpyruvate + H2O = pyruvate + phosphate. In terms of biological role, phosphoenolpyruvate phosphatase that probably operates in the vacuole to release phosphate from phosphoenolpyruvate (PEP) under phosphorus starvation. This Allium cepa (Onion) protein is Phosphoenolpyruvate phosphatase (ACPEPP).